Consider the following 627-residue polypeptide: Transducer protein MpcT (627 aa).

The next 2 membrane-spanning stretches (helical) occupy residues 28-48 and 55-75; these read MLTAVGLQFLAAGGMAFLTVF and LIGVGGMLALSVVAFYNTYLI. 2 HAMP domains span residues 78–132 and 192–247; these read ADFV…VASR and EQLR…DTIS. The Methyl-accepting transducer domain maps to 266-502; it reads RVDAVADRSA…DVVGMVEEVA (237 aa). Residues glutamate 310, glutamate 416, and glutamate 507 each carry the glutamate methyl ester (Glu) modification. 2 disordered regions span residues 505 to 527 and 557 to 627; these read SEETAAESDTVADNAAEQTDATD and GTAD…ADSQ. Residues 580-590 show a composition bias toward low complexity; it reads AAAVVDQPQPA.

Belongs to the methyl-accepting chemotaxis (MCP) protein family. As to quaternary structure, interacts with CheA, CheY and CheW1. In terms of processing, methylated by CheR.

The protein resides in the cell membrane. In terms of biological role, mediates bacteriorhodopsin- and halorhodopsin-dependent photoresponses by detecting membrane potential changes. Probably transduces the signal to the histidine kinase CheA. This Halobacterium salinarum (strain ATCC 29341 / DSM 671 / R1) protein is Transducer protein MpcT (mpcT).